The primary structure comprises 382 residues: UDP-4-amino-4-deoxy-L-arabinose--oxoglutarate aminotransferase (382 aa).

Lys-182 is subject to N6-(pyridoxal phosphate)lysine.

This sequence belongs to the DegT/DnrJ/EryC1 family. ArnB subfamily. In terms of assembly, homodimer. Pyridoxal 5'-phosphate is required as a cofactor.

The enzyme catalyses UDP-4-amino-4-deoxy-beta-L-arabinose + 2-oxoglutarate = UDP-beta-L-threo-pentopyranos-4-ulose + L-glutamate. It participates in nucleotide-sugar biosynthesis; UDP-4-deoxy-4-formamido-beta-L-arabinose biosynthesis; UDP-4-deoxy-4-formamido-beta-L-arabinose from UDP-alpha-D-glucuronate: step 2/3. The protein operates within bacterial outer membrane biogenesis; lipopolysaccharide biosynthesis. Catalyzes the conversion of UDP-4-keto-arabinose (UDP-Ara4O) to UDP-4-amino-4-deoxy-L-arabinose (UDP-L-Ara4N). The modified arabinose is attached to lipid A and is required for resistance to polymyxin and cationic antimicrobial peptides. In Pectobacterium carotovorum subsp. carotovorum (strain PC1), this protein is UDP-4-amino-4-deoxy-L-arabinose--oxoglutarate aminotransferase.